The primary structure comprises 561 residues: 3beta-hydroxysteroid-dehydrogenase/decarboxylase isoform 3 (561 aa).

Position 166 (lysine 166) interacts with NAD(+). Residues 379-561 enclose the Reticulon domain; it reads VADILLWRNE…SDASSKPMFM (183 aa). Helical transmembrane passes span 392–412, 420–440, and 504–524; these read FVSFLVLNLFYYWFFFSGNTF, LFIFAVALYGVSFVPSKIFGF, and SLAAFLFTVMSFSFTGFFIYE.

It belongs to the 3-beta-HSD family.

It localises to the endoplasmic reticulum membrane. It carries out the reaction a 3beta-hydroxysteroid-4alpha-carboxylate + NADP(+) = a 3-oxosteroid + CO2 + NADPH. The enzyme catalyses a 3beta-hydroxysteroid-4alpha-carboxylate + NAD(+) = a 3-oxosteroid + CO2 + NADH. Its pathway is steroid biosynthesis; zymosterol biosynthesis; zymosterol from lanosterol: step 4/6. This Arabidopsis thaliana (Mouse-ear cress) protein is 3beta-hydroxysteroid-dehydrogenase/decarboxylase isoform 3 (3BETAHSD/D3).